Here is a 152-residue protein sequence, read N- to C-terminus: Snaclec anticoagulant protein subunit A (152 aa).

Positions Met-1–Ala-23 are cleaved as a signal peptide. The C-type lectin domain occupies Asp-24–Ala-152. 3 disulfides stabilise this stretch: Cys-25–Cys-36, Cys-53–Cys-150, and Cys-125–Cys-142. Positions 64, 66, and 70 each coordinate Ca(2+). Glu-151 lines the Ca(2+) pocket.

The protein belongs to the snaclec family. In terms of assembly, heterodimer of subunits A and B; disulfide-linked. In terms of tissue distribution, expressed by the venom gland.

It localises to the secreted. Its function is as follows. Anticoagulant protein which binds to the gamma-carboxyglutamic acid-domain regions of factors IX and factor X in the presence of calcium with a 1 to 1 stoichiometry. Also inhibits platelet aggregation by binding to platelet glycoprotein Ibalpha (GP1BA) and functioning as a blocker of vWF. Is devoid of hemorrhagic and lethal activities. Possesses antithrombotic and thrombolytic activities. Also hydrolyzes the Aalpha-chain of fibrinogen. Does not affect the Bbeta-chain and the gamma chain. This Deinagkistrodon acutus (Hundred-pace snake) protein is Snaclec anticoagulant protein subunit A.